A 144-amino-acid polypeptide reads, in one-letter code: Large ribosomal subunit protein uL13 (144 aa).

This sequence belongs to the universal ribosomal protein uL13 family. In terms of assembly, part of the 50S ribosomal subunit.

In terms of biological role, this protein is one of the early assembly proteins of the 50S ribosomal subunit, although it is not seen to bind rRNA by itself. It is important during the early stages of 50S assembly. This Nitrosomonas europaea (strain ATCC 19718 / CIP 103999 / KCTC 2705 / NBRC 14298) protein is Large ribosomal subunit protein uL13.